A 344-amino-acid chain; its full sequence is Dihydroorotate dehydrogenase (quinone) (344 aa).

Residues 65-69 and threonine 89 each bind FMN; that span reads AGFDK. Lysine 69 provides a ligand contact to substrate. 114-118 is a substrate binding site; that stretch reads NRMGF. Positions 145 and 178 each coordinate FMN. Substrate is bound at residue asparagine 178. Serine 181 (nucleophile) is an active-site residue. Asparagine 183 is a binding site for substrate. 2 residues coordinate FMN: lysine 215 and threonine 243. A substrate-binding site is contributed by 244–245; it reads NT. FMN is bound by residues glycine 269, glycine 298, and 319–320; that span reads YT.

It belongs to the dihydroorotate dehydrogenase family. Type 2 subfamily. In terms of assembly, monomer. It depends on FMN as a cofactor.

The protein localises to the cell membrane. The catalysed reaction is (S)-dihydroorotate + a quinone = orotate + a quinol. The protein operates within pyrimidine metabolism; UMP biosynthesis via de novo pathway; orotate from (S)-dihydroorotate (quinone route): step 1/1. Its function is as follows. Catalyzes the conversion of dihydroorotate to orotate with quinone as electron acceptor. The polypeptide is Dihydroorotate dehydrogenase (quinone) (Clavibacter sepedonicus (Clavibacter michiganensis subsp. sepedonicus)).